The chain runs to 175 residues: Peptide deformylase (175 aa).

2 residues coordinate Fe cation: C96 and H138. Residue E139 is part of the active site. H142 is a binding site for Fe cation.

The protein belongs to the polypeptide deformylase family. Fe(2+) is required as a cofactor.

It carries out the reaction N-terminal N-formyl-L-methionyl-[peptide] + H2O = N-terminal L-methionyl-[peptide] + formate. In terms of biological role, removes the formyl group from the N-terminal Met of newly synthesized proteins. Requires at least a dipeptide for an efficient rate of reaction. N-terminal L-methionine is a prerequisite for activity but the enzyme has broad specificity at other positions. In Rhodopseudomonas palustris (strain BisB18), this protein is Peptide deformylase.